The chain runs to 645 residues: ATP-dependent zinc metalloprotease FtsH (645 aa).

Residues 1 to 6 are Cytoplasmic-facing; it reads MDQRPK. The helical transmembrane segment at 7–27 threads the bilayer; the sequence is FGMILFYIVLGVFLMVALRGL. Residues 28 to 110 lie on the Periplasmic side of the membrane; it reads YTTDTNLSVP…VVYEKGNDSL (83 aa). The chain crosses the membrane as a helical span at residues 111–131; the sequence is FWVNLLGTIIPLAIIVFIWFF. Residues 132-645 are Cytoplasmic-facing; the sequence is AMRSLSGRNS…AKEGNEDEKN (514 aa). 204-211 contacts ATP; sequence GPPGTGKT. Position 426 (histidine 426) interacts with Zn(2+). Glutamate 427 is an active-site residue. Histidine 430 and aspartate 503 together coordinate Zn(2+). Residues 623 to 645 are disordered; it reads SKRKVSAVSTNEEAKEGNEDEKN. The segment covering 634–645 has biased composition (basic and acidic residues); it reads EEAKEGNEDEKN.

The protein in the central section; belongs to the AAA ATPase family. This sequence in the C-terminal section; belongs to the peptidase M41 family. Homohexamer. Zn(2+) is required as a cofactor.

The protein resides in the cell inner membrane. Its function is as follows. Acts as a processive, ATP-dependent zinc metallopeptidase for both cytoplasmic and membrane proteins. Plays a role in the quality control of integral membrane proteins. The chain is ATP-dependent zinc metalloprotease FtsH from Kosmotoga olearia (strain ATCC BAA-1733 / DSM 21960 / TBF 19.5.1).